We begin with the raw amino-acid sequence, 481 residues long: Trigger factor (481 aa).

The region spanning 161-298 is the PPIase FKBP-type domain; sequence GDQLTATVQT…VSEIQNRQLP (138 aa). Residues 173 to 245 form a disordered region; it reads DGVPLHKLDE…PTTLIMEERR (73 aa). Over residues 182–235 the composition is skewed to acidic residues; it reads EEDDDDDDDDDDDDDDDDDDDDDDDDDDDDDDDDDDDDDDDDDDDDDDDDDEGE.

It belongs to the FKBP-type PPIase family. Tig subfamily.

Its subcellular location is the cytoplasm. It catalyses the reaction [protein]-peptidylproline (omega=180) = [protein]-peptidylproline (omega=0). Functionally, involved in protein export. Acts as a chaperone by maintaining the newly synthesized protein in an open conformation. Functions as a peptidyl-prolyl cis-trans isomerase. The protein is Trigger factor of Herpetosiphon aurantiacus (strain ATCC 23779 / DSM 785 / 114-95).